The sequence spans 270 residues: 4-hydroxy-tetrahydrodipicolinate reductase (270 aa).

NAD(+)-binding positions include 11-16 and Glu-37; that span reads GAGGRM. NADP(+) is bound at residue Arg-38. NAD(+) contacts are provided by residues 101–103 and 125–128; these read GTT and APNM. Residue His-158 is the Proton donor/acceptor of the active site. Residue His-159 coordinates (S)-2,3,4,5-tetrahydrodipicolinate. Lys-162 (proton donor) is an active-site residue. (S)-2,3,4,5-tetrahydrodipicolinate is bound at residue 168 to 169; the sequence is GT.

This sequence belongs to the DapB family.

The protein localises to the cytoplasm. It catalyses the reaction (S)-2,3,4,5-tetrahydrodipicolinate + NAD(+) + H2O = (2S,4S)-4-hydroxy-2,3,4,5-tetrahydrodipicolinate + NADH + H(+). The enzyme catalyses (S)-2,3,4,5-tetrahydrodipicolinate + NADP(+) + H2O = (2S,4S)-4-hydroxy-2,3,4,5-tetrahydrodipicolinate + NADPH + H(+). It functions in the pathway amino-acid biosynthesis; L-lysine biosynthesis via DAP pathway; (S)-tetrahydrodipicolinate from L-aspartate: step 4/4. Catalyzes the conversion of 4-hydroxy-tetrahydrodipicolinate (HTPA) to tetrahydrodipicolinate. In Shewanella putrefaciens (strain CN-32 / ATCC BAA-453), this protein is 4-hydroxy-tetrahydrodipicolinate reductase.